A 420-amino-acid polypeptide reads, in one-letter code: UDP-N-acetylglucosamine 1-carboxyvinyltransferase (420 aa).

Residue Lys-22–Asn-23 coordinates phosphoenolpyruvate. Arg-92 is a binding site for UDP-N-acetyl-alpha-D-glucosamine. Cys-116 serves as the catalytic Proton donor. Position 116 is a 2-(S-cysteinyl)pyruvic acid O-phosphothioketal (Cys-116). Residues Arg-121–Gln-125, Asp-304, and Ile-326 contribute to the UDP-N-acetyl-alpha-D-glucosamine site.

The protein belongs to the EPSP synthase family. MurA subfamily.

It localises to the cytoplasm. The enzyme catalyses phosphoenolpyruvate + UDP-N-acetyl-alpha-D-glucosamine = UDP-N-acetyl-3-O-(1-carboxyvinyl)-alpha-D-glucosamine + phosphate. Its pathway is cell wall biogenesis; peptidoglycan biosynthesis. In terms of biological role, cell wall formation. Adds enolpyruvyl to UDP-N-acetylglucosamine. The chain is UDP-N-acetylglucosamine 1-carboxyvinyltransferase from Paraburkholderia phytofirmans (strain DSM 17436 / LMG 22146 / PsJN) (Burkholderia phytofirmans).